The sequence spans 263 residues: NADH dehydrogenase [ubiquinone] iron-sulfur protein 3, mitochondrial (263 aa).

A mitochondrion-targeting transit peptide spans Met-1 to Arg-35.

It belongs to the complex I 30 kDa subunit family. As to quaternary structure, core subunit of respiratory chain NADH dehydrogenase (Complex I) which is composed of 45 different subunits. Interacts with NDUFAF3. Interacts with RAB5IF. Found in subcomplexes containing subunits NDUFS2, MT-ND1 and NDUFA13.

Its subcellular location is the mitochondrion inner membrane. The catalysed reaction is a ubiquinone + NADH + 5 H(+)(in) = a ubiquinol + NAD(+) + 4 H(+)(out). Core subunit of the mitochondrial membrane respiratory chain NADH dehydrogenase (Complex I) which catalyzes electron transfer from NADH through the respiratory chain, using ubiquinone as an electron acceptor. Essential for the catalytic activity and assembly of complex I. This is NADH dehydrogenase [ubiquinone] iron-sulfur protein 3, mitochondrial (Ndufs3) from Mus musculus (Mouse).